The following is a 317-amino-acid chain: Transcriptional regulator LsrR (317 aa).

Residues Gln-33 to Gln-56 constitute a DNA-binding region (H-T-H motif).

This sequence belongs to the SorC transcriptional regulatory family.

The protein localises to the cytoplasm. Inactivated by phosphorylated autoinducer-2 (phospho-AI-2). Phospho-AI-2 acts by binding to LsrR, which is then unable to bind to the promoter regions, allowing the transcription of the target genes. Functionally, transcriptional regulator that represses the expression of the lsr operon in the absence of the quorum-sensing signaling molecule autoinducer 2 (AI-2). It also represses the expression of the lsrRK operon. Acts by binding directly to the lsrA and lsrR promoter regions. In the presence of phosphorylated autoinducer-2 (phospho-AI-2), LsrR is inactivated, leading to the transcription of the genes. The polypeptide is Transcriptional regulator LsrR (lsrR) (Escherichia coli (strain K12 / DH10B)).